A 158-amino-acid chain; its full sequence is NAD(P)H-quinone oxidoreductase subunit J, chloroplastic (158 aa).

The protein belongs to the complex I 30 kDa subunit family. As to quaternary structure, NDH is composed of at least 16 different subunits, 5 of which are encoded in the nucleus.

Its subcellular location is the plastid. The protein resides in the chloroplast thylakoid membrane. The catalysed reaction is a plastoquinone + NADH + (n+1) H(+)(in) = a plastoquinol + NAD(+) + n H(+)(out). The enzyme catalyses a plastoquinone + NADPH + (n+1) H(+)(in) = a plastoquinol + NADP(+) + n H(+)(out). NDH shuttles electrons from NAD(P)H:plastoquinone, via FMN and iron-sulfur (Fe-S) centers, to quinones in the photosynthetic chain and possibly in a chloroplast respiratory chain. The immediate electron acceptor for the enzyme in this species is believed to be plastoquinone. Couples the redox reaction to proton translocation, and thus conserves the redox energy in a proton gradient. This is NAD(P)H-quinone oxidoreductase subunit J, chloroplastic from Spinacia oleracea (Spinach).